We begin with the raw amino-acid sequence, 286 residues long: MAENTMWHETLHDQFGQYFAVDNVLYHEKTDHQDLIIFENAAFGRVMALDGVVQTTERDEFIYHEMMTHVPLLAHGHAKHVLIIGGGDGAMLREVTRHKNVETITMVEIDAGVVSFCRQYLPNHNAGSYDDPRFTLVIDDGVNFVNQTHQTFDVIISDCTDPIGPGESLFTSAFYEGCKRCLNPGGIFVAQNGVCFLQQDEALDSHRKLSHYFSDVGFYQAAIPTYYGGIMTFAWATDNDALRHLSSEIIQARFHAAGLKCRYYNPAIHAAAFALPQYLHDALSAQ.

The region spanning 5–238 (TMWHETLHDQ…GIMTFAWATD (234 aa)) is the PABS domain. An S-methyl-5'-thioadenosine-binding site is contributed by glutamine 33. The spermidine site is built by histidine 64 and aspartate 88. Residues glutamate 108 and 140–141 (DG) contribute to the S-methyl-5'-thioadenosine site. Aspartate 158 (proton acceptor) is an active-site residue. 158–161 (DCTD) is a binding site for spermidine. Proline 165 provides a ligand contact to S-methyl-5'-thioadenosine.

Belongs to the spermidine/spermine synthase family. As to quaternary structure, homodimer or homotetramer.

The protein localises to the cytoplasm. It carries out the reaction S-adenosyl 3-(methylsulfanyl)propylamine + putrescine = S-methyl-5'-thioadenosine + spermidine + H(+). It participates in amine and polyamine biosynthesis; spermidine biosynthesis; spermidine from putrescine: step 1/1. Catalyzes the irreversible transfer of a propylamine group from the amino donor S-adenosylmethioninamine (decarboxy-AdoMet) to putrescine (1,4-diaminobutane) to yield spermidine. This Salmonella enteritidis PT4 (strain P125109) protein is Polyamine aminopropyltransferase.